The sequence spans 277 residues: MTNTQTEIINELKVSPAIDVAKEVEFRVQFLVDYLRASHTKGFVLGISGGQDSTLAGRLTQLAVERIRAEENSTDYVFYAVRLPYAIQADEDDAQVALEFIAPDKSVTVNVKDATDATEATVAAALELPELTDFNRGNIKARQRMVAQYAIAGQLGLLVIGTDHAAENVTGFFTKFGDGAADLLPLAGLSKRQGAAILEHLGAPSSTWTKVPTADLEEDRPALPDEEALGVSYADIDNYLENKPDVSEKAQQRIEHLWKVGQHKRHLPATPQENWWR.

Residue 46-53 (GISGGQDS) coordinates ATP. Position 52 (D52) interacts with Mg(2+). R142 provides a ligand contact to deamido-NAD(+). T162 provides a ligand contact to ATP. E167 lines the Mg(2+) pocket. Positions 175 and 182 each coordinate deamido-NAD(+). 2 residues coordinate ATP: K191 and T213. 263–264 (HK) lines the deamido-NAD(+) pocket.

Belongs to the NAD synthetase family. Homodimer.

It carries out the reaction deamido-NAD(+) + NH4(+) + ATP = AMP + diphosphate + NAD(+) + H(+). Its pathway is cofactor biosynthesis; NAD(+) biosynthesis; NAD(+) from deamido-NAD(+) (ammonia route): step 1/1. Functionally, catalyzes the ATP-dependent amidation of deamido-NAD to form NAD. Uses ammonia as a nitrogen source. The sequence is that of NH(3)-dependent NAD(+) synthetase from Corynebacterium glutamicum (strain ATCC 13032 / DSM 20300 / JCM 1318 / BCRC 11384 / CCUG 27702 / LMG 3730 / NBRC 12168 / NCIMB 10025 / NRRL B-2784 / 534).